Consider the following 380-residue polypeptide: S-phase entry cyclin-6 (380 aa).

A disordered region spans residues 63–91; it reads PRGKLQRDSTHLEKTRKRQLSNDSTDPIE.

It belongs to the cyclin family. Cyclin AB subfamily.

Functionally, involved in G1/S and or S phase progression. Interacts with CDC28. In Saccharomyces cerevisiae (strain ATCC 204508 / S288c) (Baker's yeast), this protein is S-phase entry cyclin-6 (CLB6).